A 637-amino-acid polypeptide reads, in one-letter code: Chaperone protein dnaK2 (637 aa).

Threonine 197 carries the post-translational modification Phosphothreonine; by autocatalysis. The disordered stretch occupies residues 602 to 637 (AAAGGAAPGGDAGASAASGGGDASDDVIDAEFTETK). Residues 603 to 623 (AAGGAAPGGDAGASAASGGGD) show a composition bias toward gly residues. The segment covering 624–637 (ASDDVIDAEFTETK) has biased composition (acidic residues).

Belongs to the heat shock protein 70 family.

Its function is as follows. Acts as a chaperone. This is Chaperone protein dnaK2 (dnaK2) from Parasynechococcus marenigrum (strain WH8102).